Consider the following 378-residue polypeptide: Probable selenide, water dikinase (378 aa).

C33 is an active-site residue. ATP-binding positions include K36, 63 to 65, D83, D106, and 158 to 160; these read GLD and GQT. D65 is a Mg(2+) binding site. Residue D106 coordinates Mg(2+). A Mg(2+)-binding site is contributed by D260.

It belongs to the selenophosphate synthase 1 family. Class I subfamily. As to quaternary structure, homodimer. Mg(2+) serves as cofactor.

The catalysed reaction is hydrogenselenide + ATP + H2O = selenophosphate + AMP + phosphate + 2 H(+). Synthesizes selenophosphate from selenide and ATP. This Caenorhabditis elegans protein is Probable selenide, water dikinase (seld-1).